The primary structure comprises 271 residues: uncharacterized protein (271 aa).

3 consecutive transmembrane segments (helical) span residues 30–50 (IWFP…GMLL), 189–209 (ALAA…YFLI), and 218–238 (FLVT…IFAC).

It is found in the cell membrane. This is an uncharacterized protein from Aquifex aeolicus (strain VF5).